The following is a 736-amino-acid chain: Probable beta-glucosidase L (736 aa).

A signal peptide spans 1 to 21 (MNYRVPSLKATALAMAALTQA). Asn224 carries N-linked (GlcNAc...) asparagine glycosylation. Asp252 is an active-site residue. 4 N-linked (GlcNAc...) asparagine glycosylation sites follow: Asn295, Asn363, Asn429, and Asn607.

Belongs to the glycosyl hydrolase 3 family.

It is found in the secreted. It carries out the reaction Hydrolysis of terminal, non-reducing beta-D-glucosyl residues with release of beta-D-glucose.. It functions in the pathway glycan metabolism; cellulose degradation. Beta-glucosidases are one of a number of cellulolytic enzymes involved in the degradation of cellulosic biomass. Catalyzes the last step releasing glucose from the inhibitory cellobiose. The chain is Probable beta-glucosidase L (bglL) from Aspergillus terreus (strain NIH 2624 / FGSC A1156).